A 302-amino-acid polypeptide reads, in one-letter code: Homoserine O-acetyltransferase (302 aa).

The Acyl-thioester intermediate role is filled by C142. Substrate-binding residues include K163 and S192. Residue H235 is the Proton acceptor of the active site. E237 is a catalytic residue. R249 contributes to the substrate binding site.

The protein belongs to the MetA family.

The protein localises to the cytoplasm. It carries out the reaction L-homoserine + acetyl-CoA = O-acetyl-L-homoserine + CoA. It participates in amino-acid biosynthesis; L-methionine biosynthesis via de novo pathway; O-acetyl-L-homoserine from L-homoserine: step 1/1. Transfers an acetyl group from acetyl-CoA to L-homoserine, forming acetyl-L-homoserine. The protein is Homoserine O-acetyltransferase of Bacillus pumilus (strain SAFR-032).